The sequence spans 553 residues: CDP-diacylglycerol--glycerol-3-phosphate 3-phosphatidyltransferase, mitochondrial (553 aa).

The transit peptide at 1 to 25 directs the protein to the mitochondrion; it reads MAAPAAGPVFWRRLLGLLPGRPGLA. S46 carries the post-translational modification Phosphoserine. Residue 121 to 128 coordinates ATP; it reads ASLYLGTG. PLD phosphodiesterase domains follow at residues 212–238 and 457–490; these read TIGL…SDSY and TGWT…GYRS. Catalysis depends on residues H217, K219, and D224.

Belongs to the CDP-alcohol phosphatidyltransferase class-II family.

Its subcellular location is the mitochondrion. The catalysed reaction is a CDP-1,2-diacyl-sn-glycerol + sn-glycerol 3-phosphate = a 1,2-diacyl-sn-glycero-3-phospho-(1'-sn-glycero-3'-phosphate) + CMP + H(+). It participates in phospholipid metabolism; phosphatidylglycerol biosynthesis; phosphatidylglycerol from CDP-diacylglycerol: step 1/2. Activated by calcium and magnesium and inhibited by other bivalent cations. In terms of biological role, functions in the biosynthesis of the anionic phospholipids phosphatidylglycerol and cardiolipin. The sequence is that of CDP-diacylglycerol--glycerol-3-phosphate 3-phosphatidyltransferase, mitochondrial (PGS1) from Cricetulus griseus (Chinese hamster).